A 384-amino-acid chain; its full sequence is ATP phosphoribosyltransferase regulatory subunit (384 aa).

The protein belongs to the class-II aminoacyl-tRNA synthetase family. HisZ subfamily. As to quaternary structure, heteromultimer composed of HisG and HisZ subunits.

It is found in the cytoplasm. It participates in amino-acid biosynthesis; L-histidine biosynthesis; L-histidine from 5-phospho-alpha-D-ribose 1-diphosphate: step 1/9. Required for the first step of histidine biosynthesis. May allow the feedback regulation of ATP phosphoribosyltransferase activity by histidine. The polypeptide is ATP phosphoribosyltransferase regulatory subunit (Paracidovorax citrulli (strain AAC00-1) (Acidovorax citrulli)).